A 207-amino-acid polypeptide reads, in one-letter code: MRTIDKRIAPNVRLAATLVARAPALTLAYDARCKSRLAATLDTGEDVALVLPRGTVLRDGDVLVADDGALVRVAAAHEAVLLVRAPDALTLTRAAYHLGNRHTPVEVGAGCLKLEYDPVLADMLTRLGATVERASAPFQPEAGAYGGGHRHGHDATFAEDYALAQQVFDEHHGHSHSHSHDHDHDHDHDHDHQHGPCCSHGHHHGHR.

Residues 170-194 (EHHGHSHSHSHDHDHDHDHDHDHQH) are compositionally biased toward basic and acidic residues. A disordered region spans residues 170-207 (EHHGHSHSHSHDHDHDHDHDHDHQHGPCCSHGHHHGHR).

Belongs to the UreE family.

The protein localises to the cytoplasm. In terms of biological role, involved in urease metallocenter assembly. Binds nickel. Probably functions as a nickel donor during metallocenter assembly. The polypeptide is Urease accessory protein UreE (Burkholderia pseudomallei (strain 1106a)).